Here is a 1167-residue protein sequence, read N- to C-terminus: Melanoma receptor tyrosine-protein kinase (1167 aa).

A signal peptide spans 1–25; the sequence is MEFLRGGAALLQLLLVLSISRCCST. At 26–642 the chain is on the extracellular side; the sequence is DPDRKVCQGT…GCRGDIVSHS (617 aa). 3 N-linked (GlcNAc...) asparagine glycosylation sites follow: asparagine 114, asparagine 144, and asparagine 201. Intrachain disulfides connect cysteine 195–cysteine 204, cysteine 199–cysteine 212, cysteine 220–cysteine 228, cysteine 224–cysteine 236, cysteine 237–cysteine 245, cysteine 241–cysteine 253, cysteine 256–cysteine 265, cysteine 269–cysteine 296, cysteine 300–cysteine 311, cysteine 315–cysteine 330, and cysteine 333–cysteine 337. 5 N-linked (GlcNAc...) asparagine glycosylation sites follow: asparagine 356, asparagine 365, asparagine 398, asparagine 417, and asparagine 501. Disulfide bonds link cysteine 504/cysteine 513, cysteine 508/cysteine 521, cysteine 524/cysteine 533, cysteine 537/cysteine 553, cysteine 556/cysteine 569, cysteine 560/cysteine 577, cysteine 593/cysteine 615, cysteine 618/cysteine 626, and cysteine 622/cysteine 634. Asparagine 576 is a glycosylation site (N-linked (GlcNAc...) asparagine). The N-linked (GlcNAc...) asparagine glycan is linked to asparagine 621. Residues 643-665 form a helical membrane-spanning segment; sequence SLAVGLVSGLLITVIVALLIVVL. Residues 666-1167 are Cytoplasmic-facing; it reads LRRRRIKRKR…QGGALYTPVR (502 aa). The 268-residue stretch at 710-977 folds into the Protein kinase domain; it reads FKKDRVLGSG…QMARDPSRYL (268 aa). ATP is bound by residues 716-724 and lysine 743; that span reads LGSGAFGTV. The Proton acceptor role is filled by aspartate 835.

Belongs to the protein kinase superfamily. Tyr protein kinase family. EGF receptor subfamily.

Its subcellular location is the membrane. It carries out the reaction L-tyrosyl-[protein] + ATP = O-phospho-L-tyrosyl-[protein] + ADP + H(+). In terms of biological role, probable receptor with tyrosine-protein kinase activity. This Xiphophorus maculatus (Southern platyfish) protein is Melanoma receptor tyrosine-protein kinase (xmrk).